The chain runs to 235 residues: Octanoyltransferase LIP2, mitochondrial (235 aa).

The transit peptide at 1–32 directs the protein to the mitochondrion; that stretch reads MRSPRTLEVWKLGTVNYLKSLKLQEKLVSERK. The BPL/LPL catalytic domain maps to 34–218; the sequence is HQIPDTLLSL…CLAKAFSYDD (185 aa). Residues 79-86, 147-149, and 160-162 contribute to the substrate site; these read RGGDITFH, AIG, and GLA. C178 acts as the Acyl-thioester intermediate in catalysis.

It belongs to the LipB family. As to expression, expressed in leaves. Expressed in roots, rosette leaves, cauline leaves, stems and siliques.

Its subcellular location is the mitochondrion. It catalyses the reaction octanoyl-[ACP] + L-lysyl-[protein] = N(6)-octanoyl-L-lysyl-[protein] + holo-[ACP] + H(+). It participates in protein modification; protein lipoylation via endogenous pathway; protein N(6)-(lipoyl)lysine from octanoyl-[acyl-carrier-protein]: step 1/2. Functionally, catalyzes the transfer of endogenously produced octanoic acid from octanoyl-acyl-carrier-protein onto the lipoyl domains of lipoate-dependent enzymes. Lipoyl-ACP can also act as a substrate although octanoyl-ACP is likely to be the physiological substrate. Together with LIP1 is essential for mitochondrial protein lipoylation during seed development. Required for the lipoylation of mitochondrial 2-oxoglutarate dehydrogenase component E2 proteins in leaves and roots. The polypeptide is Octanoyltransferase LIP2, mitochondrial (Arabidopsis thaliana (Mouse-ear cress)).